Consider the following 147-residue polypeptide: Ribonuclease P protein component (147 aa).

The segment at 117–147 (TRPRGQSSHRTRASREATSAHTTAVGEQPTQ) is disordered.

Belongs to the RnpA family. In terms of assembly, consists of a catalytic RNA component (M1 or rnpB) and a protein subunit.

It catalyses the reaction Endonucleolytic cleavage of RNA, removing 5'-extranucleotides from tRNA precursor.. Its function is as follows. RNaseP catalyzes the removal of the 5'-leader sequence from pre-tRNA to produce the mature 5'-terminus. It can also cleave other RNA substrates such as 4.5S RNA. The protein component plays an auxiliary but essential role in vivo by binding to the 5'-leader sequence and broadening the substrate specificity of the ribozyme. The chain is Ribonuclease P protein component from Thermobifida fusca (strain YX).